Consider the following 292-residue polypeptide: Elongation factor Ts (292 aa).

The interval T81–V84 is involved in Mg(2+) ion dislocation from EF-Tu.

It belongs to the EF-Ts family.

It is found in the cytoplasm. Associates with the EF-Tu.GDP complex and induces the exchange of GDP to GTP. It remains bound to the aminoacyl-tRNA.EF-Tu.GTP complex up to the GTP hydrolysis stage on the ribosome. This chain is Elongation factor Ts, found in Psychromonas ingrahamii (strain DSM 17664 / CCUG 51855 / 37).